A 607-amino-acid chain; its full sequence is BTB/POZ domain-containing protein DOT3 (607 aa).

Residues 52 to 121 form the BTB domain; that stretch reads TDLSIQVNDI…CYNLPLDLNP (70 aa). The 277-residue stretch at 211–487 folds into the NPH3 domain; sequence RCLYNDIATL…VQINTQVLFS (277 aa). Tyr428 carries the phosphotyrosine modification. Disordered stretches follow at residues 498-520 and 573-607; these read DKLPEKEEENSGGREDKRMSRDN and KSFQTKREDEETRERTRRRSSTGQRTSFRRRMSMS. Basic and acidic residues-rich tracts occupy residues 499 to 520 and 577 to 586; these read KLPEKEEENSGGREDKRMSRDN and TKREDEETRE. Positions 511–563 form a coiled coil; that stretch reads REDKRMSRDNEIIKTLKEELENVKKKMSELQSDYNELQQEYERLSSKQKSSHN.

Belongs to the NPH3 family. Expressed in emerging leaf primordia.

It participates in protein modification; protein ubiquitination. In terms of biological role, may act as a substrate-specific adapter of an E3 ubiquitin-protein ligase complex (CUL3-RBX1-BTB) which mediates the ubiquitination and subsequent proteasomal degradation of target proteins. Involved in leaf vasculature patterning. The polypeptide is BTB/POZ domain-containing protein DOT3 (Arabidopsis thaliana (Mouse-ear cress)).